We begin with the raw amino-acid sequence, 632 residues long: 2-oxoacid:ferredoxin oxidoreductase subunit alpha (632 aa).

Positions 254–258 (YPITP) match the YPITP motif motif. Thr257 and Arg345 together coordinate substrate.

Heterodimer composed of an alpha and a beta subunit.

It carries out the reaction a 2-oxocarboxylate + 2 oxidized [2Fe-2S]-[ferredoxin] + CoA = an acyl-CoA + 2 reduced [2Fe-2S]-[ferredoxin] + CO2 + H(+). Its function is as follows. Catalyzes the coenzyme A-dependent oxidative decarboxylation of different 2-oxoacids such as 2-oxoglutarate, pyruvate and 2-oxobutyrate to form their CoA derivatives. The protein is 2-oxoacid:ferredoxin oxidoreductase subunit alpha of Saccharolobus solfataricus (Sulfolobus solfataricus).